A 380-amino-acid polypeptide reads, in one-letter code: Crotonobetainyl-CoA reductase (380 aa).

Belongs to the acyl-CoA dehydrogenase family. In terms of assembly, homotetramer. Requires FAD as cofactor.

It localises to the cytoplasm. The catalysed reaction is 4-(trimethylamino)butanoyl-CoA + oxidized [electron-transfer flavoprotein] + H(+) = crotonobetainyl-CoA + reduced [electron-transfer flavoprotein]. It participates in amine and polyamine metabolism; carnitine metabolism. Functionally, catalyzes the reduction of crotonobetainyl-CoA to gamma-butyrobetainyl-CoA. This is Crotonobetainyl-CoA reductase from Escherichia coli O6:K15:H31 (strain 536 / UPEC).